The following is a 228-amino-acid chain: Glucose-induced degradation protein 8 homolog (228 aa).

Residues 29–61 enclose the LisH domain; sequence SKSDLNKLVMNYLVIEGYQEAAAKFQEESSTQT. The region spanning 67–124 is the CTLH domain; it reads SIADRMAIRSAIQCGDVEKGIEIVNDLNPEILDTNPQLYFHLQQQKLIELIRKGMTAE.

It belongs to the GID8 family.

It is found in the cytoplasm. The protein localises to the nucleus. Core component of the CTLH E3 ubiquitin-protein ligase complex that mediates ubiquitination and subsequent proteasomal degradation of target proteins. Acts as a positive regulator of Wnt signaling pathway by promoting beta-catenin (CTNNB1) nuclear accumulation. This chain is Glucose-induced degradation protein 8 homolog, found in Dictyostelium discoideum (Social amoeba).